The following is a 406-amino-acid chain: Probable G-protein coupled receptor tkr-1 (406 aa).

Residues 1 to 47 (MNQEFLIQLGERACKNAENLTLPAELEGIFFCAPSSRESLATQVFVA) are Extracellular-facing. The chain crosses the membrane as a helical span at residues 48-68 (IAFVLLMATAIIGNSVVMWII). Residues 69-76 (YQHKVMHY) lie on the Cytoplasmic side of the membrane. Residues 77 to 97 (GFNYFLFNMAFADLLIALFNV) form a helical membrane-spanning segment. Residues 98–115 (GTSWTYNLYYDWWYGDLC) lie on the Extracellular side of the membrane. A helical transmembrane segment spans residues 116–136 (TLTSFFGIAPTTVSVCSMMAL). Over 137–158 (SWDRCQAVVNPLQKRPLSRKRS) the chain is Cytoplasmic. The helical transmembrane segment at 159–179 (VIAILIIWVVSTVTALPFAIA) threads the bilayer. At 180 to 204 (ASVNSLYTYDVVTSTVSKAHVCSAP) the chain is on the extracellular side. The helical transmembrane segment at 205 to 225 (VNTFFEKVLFGIQYALPIIIL) threads the bilayer. The Cytoplasmic segment spans residues 226–261 (GSTFTRIAVAFRATNEATDSSLKNNHTRAKSKAVKM). Residues 262 to 282 (LFLMVVAFVVCWLPYHIYHAF) traverse the membrane as a helical segment. Residues 283 to 297 (ALEEFFDAARGKYAY) lie on the Extracellular side of the membrane. Residues 298–318 (LLIYWIAMSSCAYNPIIYCFA) form a helical membrane-spanning segment. Over 319 to 406 (NERFRIGFRY…KVHLLSCHER (88 aa)) the chain is Cytoplasmic.

This sequence belongs to the G-protein coupled receptor 1 family.

It is found in the cell membrane. Not known. Putative receptor. The polypeptide is Probable G-protein coupled receptor tkr-1 (tkr-1) (Caenorhabditis elegans).